An 864-amino-acid chain; its full sequence is Leucine--tRNA ligase (864 aa).

Residues 42–52 (PYPSGKLHMGH) carry the 'HIGH' region motif. The 'KMSKS' region signature appears at 624 to 628 (KMSKS). K627 is an ATP binding site.

This sequence belongs to the class-I aminoacyl-tRNA synthetase family.

It is found in the cytoplasm. The catalysed reaction is tRNA(Leu) + L-leucine + ATP = L-leucyl-tRNA(Leu) + AMP + diphosphate. The polypeptide is Leucine--tRNA ligase (Burkholderia mallei (strain NCTC 10229)).